A 175-amino-acid chain; its full sequence is Interferon gamma (175 aa).

The N-terminal stretch at 1–23 (MNATCCILALLLCLTQAISGCYC) is a signal peptide. Glutamine 24 bears the Pyrrolidone carboxylic acid mark. N-linked (GlcNAc...) asparagine glycans are attached at residues asparagine 39 and asparagine 106.

Belongs to the type II (or gamma) interferon family. As to quaternary structure, homodimer. Interacts with IFNGR1 (via extracellular domain); this interaction promotes IFNGR1 dimerization. As to expression, released primarily from activated T lymphocytes.

It localises to the secreted. Functionally, type II interferon produced by immune cells such as T-cells and NK cells that plays crucial roles in antimicrobial, antiviral, and antitumor responses by activating effector immune cells and enhancing antigen presentation. Primarily signals through the JAK-STAT pathway after interaction with its receptor IFNGR1 to affect gene regulation. Upon IFNG binding, IFNGR1 intracellular domain opens out to allow association of downstream signaling components JAK2, JAK1 and STAT1, leading to STAT1 activation, nuclear translocation and transcription of IFNG-regulated genes. Many of the induced genes are transcription factors such as IRF1 that are able to further drive regulation of a next wave of transcription. Plays a role in class I antigen presentation pathway by inducing a replacement of catalytic proteasome subunits with immunoproteasome subunits. In turn, increases the quantity, quality, and repertoire of peptides for class I MHC loading. Increases the efficiency of peptide generation also by inducing the expression of activator PA28 that associates with the proteasome and alters its proteolytic cleavage preference. Up-regulates as well MHC II complexes on the cell surface by promoting expression of several key molecules such as cathepsins B/CTSB, H/CTSH, and L/CTSL. Participates in the regulation of hematopoietic stem cells during development and under homeostatic conditions by affecting their development, quiescence, and differentiation. This Peromyscus maniculatus (North American deer mouse) protein is Interferon gamma (IFNG).